A 523-amino-acid polypeptide reads, in one-letter code: Cysteine-rich secretory protein LCCL domain-containing 1 (523 aa).

The signal sequence occupies residues 1-23; the sequence is MKYVVQEWLRITTLLFIAQAVSA. The SCP domain maps to 66–206; the sequence is LDLHNKLRGQ…PKAVYLVCNY (141 aa). Residues 246-298 form a disordered region; that stretch reads ERPYSPHEPEEETNEIERQRSKAQDATAQSRPRTHSPSGSTGSEDSEKNEVIS. Residues 269-288 are compositionally biased toward polar residues; that stretch reads QDATAQSRPRTHSPSGSTGS. LCCL domains lie at 302–397 and 403–505; these read MSQI…ANSF and TVQA…PGKQ. Intrachain disulfides connect Cys-308–Cys-326, Cys-330–Cys-350, Cys-409–Cys-431, and Cys-435–Cys-458.

This sequence belongs to the CRISP family.

The protein localises to the secreted. The chain is Cysteine-rich secretory protein LCCL domain-containing 1 (CRISPLD1) from Gallus gallus (Chicken).